We begin with the raw amino-acid sequence, 165 residues long: MISVATAECFTHGKIGVKIHKMACGYKEVEKDPNYSIINGNVFVMASMFLPSKKGIESLLDVKLPEPDYVFKYSKAYTQENDILVAKIVANALKNKLNCDIAISSTAGIGNGAICILTDKKEYNFTSEVYGDLIKGENILKRQENGINKAFDTVIEILKKEYGLK.

The protein belongs to the UPF0254 family.

The protein is UPF0254 protein MmarC7_0182 of Methanococcus maripaludis (strain C7 / ATCC BAA-1331).